The primary structure comprises 406 residues: LIM/homeobox protein Lhx1 (406 aa).

LIM zinc-binding domains lie at 4-54 (CAGC…CKND) and 63-117 (CAGC…CKED). 2 disordered regions span residues 128–187 (NSLH…RTTI) and 293–374 (YDFF…EVFG). Positions 137–148 (SDPSLSPDSQDP) are enriched in low complexity. Basic and acidic residues predominate over residues 151-167 (DDAKDSESANVSDKEAG). The residue at position 162 (S162) is a Phosphoserine. The segment at residues 180–239 (RRGPRTTIKAKQLETLKAAFAATPKPTRHIREQLAQETGLNMRVIQVWFQNRRSKERRMK) is a DNA-binding region (homeobox). Residues 315 to 327 (PSSGPSGTPLGGL) show a composition bias toward low complexity. Positions 352 to 362 (GDSPSPEPSLP) are enriched in pro residues.

Interacts with LDB1 via the tandem LIM domains. In terms of tissue distribution, expressed in the brain, thymus, and tonsils. Expressed in samples from patients with chronic myeloid leukemia (CML) and in 58% of acute myeloid leukemia (AML) cell lines.

Its subcellular location is the nucleus. In terms of biological role, potential transcription factor. May play a role in early mesoderm formation and later in lateral mesoderm differentiation and neurogenesis. In Homo sapiens (Human), this protein is LIM/homeobox protein Lhx1 (LHX1).